We begin with the raw amino-acid sequence, 498 residues long: Cytochrome P450 6B1 (498 aa).

A heme-binding site is contributed by Cys-443.

This sequence belongs to the cytochrome P450 family. The cofactor is heme. As to expression, midgut microsome.

It is found in the endoplasmic reticulum membrane. Its subcellular location is the microsome membrane. It carries out the reaction an organic molecule + reduced [NADPH--hemoprotein reductase] + O2 = an alcohol + oxidized [NADPH--hemoprotein reductase] + H2O + H(+). Functionally, enables the insect to feed on furanocoumarin-producing plants and evolved as an adaptation for detoxification of xanthotoxin and other furanocoumarins. This chain is Cytochrome P450 6B1 (CYP6B1), found in Papilio polyxenes (Black swallowtail butterfly).